The chain runs to 1005 residues: Retinoblastoma-related protein (1005 aa).

The tract at residues 404–605 is domain A; sequence TPVSTAMTTA…EKGSSMYNSL (202 aa). Residues 404-853 form a pocket region; it reads TPVSTAMTTA…NEIFIPSVKP (450 aa). Residues 606–722 form a spacer region; sequence TIARPNLSNE…HPTRGETCAE (117 aa). The interval 723–853 is domain B; sequence TAVNLFFSKI…NEIFIPSVKP (131 aa). The span at 863–873 shows a compositional bias: polar residues; the sequence is VPKNPNNQVSE. Residues 863–899 form a disordered region; sequence VPKNPNNQVSETNKKDESGPCPCPGSPKVSSFPSLPD.

This sequence belongs to the retinoblastoma protein (RB) family.

The protein localises to the nucleus. Its function is as follows. Regulator of biological processes that recruits a histone deacetylase to control gene transcription. May play a role in the entry into mitosis, negatively regulating the cell proliferation. Formation of stable complexes with geminiviridae replication-associated proteins may create a cellular environment which favors viral DNA replication. The chain is Retinoblastoma-related protein (RBR) from Pilosella piloselloides (Glaucous king-devil hawkweed).